A 1198-amino-acid chain; its full sequence is Rac guanine nucleotide exchange factor B (1198 aa).

The tract at residues 1–104 (MFSNFFGSSK…QHQGVITSLQ (104 aa)) is disordered. A compositionally biased stretch (low complexity) spans 8 to 20 (SSKRNTIASSSSS). The span at 21–34 (SKKDKDNGKDESSK) shows a compositional bias: basic and acidic residues. A compositionally biased stretch (polar residues) spans 35 to 58 (LKNSGSSTLPKPITNNESGNNFIT). The span at 59–97 (SPSVSSPLISPLSSSPSPLLSSSSNSIQSTSHQQQQQHQ) shows a compositional bias: low complexity. Residues 126 to 232 (SSLEQTARKW…NIVVLGKHAS (107 aa)) enclose the Calponin-homology (CH) 1 domain. Positions 260–284 (FGGNHNNNNNNNNNNNTSNGDLSPV) are disordered. A compositionally biased stretch (low complexity) spans 263 to 275 (NHNNNNNNNNNNN). 2 Calponin-homology (CH) domains span residues 341–449 (PELQ…NKMY) and 511–619 (PEDM…ENFD). The DH domain occupies 632 to 846 (RRQKVIEEII…KRVADHVNES (215 aa)). Positions 876 to 1026 (TYIREGFLEI…WMEDLRSCLQ (151 aa)) constitute a PH domain. The span at 940–952 (GEACVDGDDDGGE) shows a compositional bias: acidic residues. 2 disordered regions span residues 940 to 989 (GEAC…SNKS) and 1076 to 1198 (NNNN…IDNQ). Composition is skewed to low complexity over residues 977–989 (NSNNNNNSNSNKS) and 1076–1118 (NNNN…NNND). The span at 1155-1167 (DETISDTESDDYE) shows a compositional bias: acidic residues. The segment covering 1188–1198 (FSDTIKNIDNQ) has biased composition (polar residues).

As to quaternary structure, binds to F-actin.

It is found in the late endosome. Its function is as follows. Involved in the regulation of the late steps of the endocytic pathway. The sequence is that of Rac guanine nucleotide exchange factor B (gxcB) from Dictyostelium discoideum (Social amoeba).